Reading from the N-terminus, the 489-residue chain is GTPase Der (489 aa).

EngA-type G domains follow at residues 30 to 199 (PVVS…KDKP) and 227 to 403 (FRLA…SRSH). GTP-binding positions include 36-43 (GRQNVGKS), 85-89 (DTPGL), 151-154 (NKAD), 233-240 (GKPNSGKS), 280-284 (DTAGI), and 345-348 (NKWD). The region spanning 404-488 (RKVSTSELNK…PIRLEFRSDR (85 aa)) is the KH-like domain.

The protein belongs to the TRAFAC class TrmE-Era-EngA-EngB-Septin-like GTPase superfamily. EngA (Der) GTPase family. Associates with the 50S ribosomal subunit.

Functionally, GTPase that plays an essential role in the late steps of ribosome biogenesis. This chain is GTPase Der, found in Leptospira interrogans serogroup Icterohaemorrhagiae serovar Lai (strain 56601).